The following is a 156-amino-acid chain: Large ribosomal subunit protein uL13 (156 aa).

This sequence belongs to the universal ribosomal protein uL13 family. In terms of assembly, part of the 50S ribosomal subunit.

In terms of biological role, this protein is one of the early assembly proteins of the 50S ribosomal subunit, although it is not seen to bind rRNA by itself. It is important during the early stages of 50S assembly. The chain is Large ribosomal subunit protein uL13 from Archaeoglobus fulgidus (strain ATCC 49558 / DSM 4304 / JCM 9628 / NBRC 100126 / VC-16).